The primary structure comprises 371 residues: D-alanine--D-alanine ligase (371 aa).

An ATP-grasp domain is found at 154 to 361 (KKLLVAEGLP…YPTLLAAMVD (208 aa)). 182–237 (RERLGLPVFVKPARGGSSIGVSRVSDWAELPAAIEAARRHDPKVIVEAGIAGRELE) lines the ATP pocket. Residues aspartate 316, glutamate 328, and asparagine 330 each contribute to the Mg(2+) site.

The protein belongs to the D-alanine--D-alanine ligase family. Requires Mg(2+) as cofactor. Mn(2+) serves as cofactor.

The protein localises to the cytoplasm. It carries out the reaction 2 D-alanine + ATP = D-alanyl-D-alanine + ADP + phosphate + H(+). Its pathway is cell wall biogenesis; peptidoglycan biosynthesis. Cell wall formation. The sequence is that of D-alanine--D-alanine ligase from Mycobacterium sp. (strain JLS).